A 154-amino-acid chain; its full sequence is MAGPVKDREAFQRLNFLYQAAHCVLAQDPENQALARFYCHTERTIAKRLVLRRDPSVKRTLCRGCSSLLVPGLTCTQRQRRCRGQRWTVQTCLTCQRSQRFLNDPGHLLWGDRPEAQLGNQADSKPLQPLPNTAHSISDHLPEEKMQIQGSSDQ.

The residue at position 2 (A2) is an N-acetylalanine. Residues C62, C65, C92, and C95 each contribute to the Zn(2+) site. The interval 112 to 154 is disordered; sequence DRPEAQLGNQADSKPLQPLPNTAHSISDHLPEEKMQIQGSSDQ. Basic and acidic residues predominate over residues 137 to 146; it reads ISDHLPEEKM.

It belongs to the eukaryotic/archaeal RNase P protein component 4 family. As to quaternary structure, RNase P consists of a catalytic RNA moiety and about 10 protein subunits; POP1, POP4, POP5, POP7, RPP14, RPP21, RPP25, RPP30, RPP38 and RPP40. Within the RNase P complex, POP1, POP7 and RPP25 form the 'finger' subcomplex, POP5, RPP14, RPP40 and homodimeric RPP30 form the 'palm' subcomplex, and RPP21, POP4 and RPP38 form the 'wrist' subcomplex. All subunits of the RNase P complex interact with the catalytic RNA.

Its subcellular location is the nucleus. It is found in the nucleolus. Functionally, component of ribonuclease P, a ribonucleoprotein complex that generates mature tRNA molecules by cleaving their 5'-ends. The chain is Ribonuclease P protein subunit p21 (RPP21) from Macaca mulatta (Rhesus macaque).